Reading from the N-terminus, the 205-residue chain is Holliday junction branch migration complex subunit RuvA (205 aa).

The interval 1–65 is domain I; the sequence is MIAKLKGILD…EDRIHLFGFL (65 aa). Residues 66–144 form a domain II region; that stretch reads DNTEKVAFNM…NINTIANNTS (79 aa). The flexible linker stretch occupies residues 145-153; it reads LATLSTDSN. Positions 154–205 are domain III; sequence THDNILSDAITALIALGISRAEATQILSDIYALSPSISVNELVRTALQRRAK.

Belongs to the RuvA family. In terms of assembly, homotetramer. Forms an RuvA(8)-RuvB(12)-Holliday junction (HJ) complex. HJ DNA is sandwiched between 2 RuvA tetramers; dsDNA enters through RuvA and exits via RuvB. An RuvB hexamer assembles on each DNA strand where it exits the tetramer. Each RuvB hexamer is contacted by two RuvA subunits (via domain III) on 2 adjacent RuvB subunits; this complex drives branch migration. In the full resolvosome a probable DNA-RuvA(4)-RuvB(12)-RuvC(2) complex forms which resolves the HJ.

The protein resides in the cytoplasm. In terms of biological role, the RuvA-RuvB-RuvC complex processes Holliday junction (HJ) DNA during genetic recombination and DNA repair, while the RuvA-RuvB complex plays an important role in the rescue of blocked DNA replication forks via replication fork reversal (RFR). RuvA specifically binds to HJ cruciform DNA, conferring on it an open structure. The RuvB hexamer acts as an ATP-dependent pump, pulling dsDNA into and through the RuvAB complex. HJ branch migration allows RuvC to scan DNA until it finds its consensus sequence, where it cleaves and resolves the cruciform DNA. This Orientia tsutsugamushi (strain Ikeda) (Rickettsia tsutsugamushi) protein is Holliday junction branch migration complex subunit RuvA.